The primary structure comprises 396 residues: Elongation factor Tu 2 (396 aa).

The region spanning 10–206 is the tr-type G domain; it reads KPHVNVGTIG…ALDTYIPTPK (197 aa). Positions 19-26 are G1; sequence GHVDHGKT. GTP is bound at residue 19–26; it reads GHVDHGKT. Threonine 26 serves as a coordination point for Mg(2+). Positions 60-64 are G2; sequence GITIS. Positions 81 to 84 are G3; it reads DCPG. Residues 81–85 and 136–139 each bind GTP; these read DCPGH and NKAD. The tract at residues 136 to 139 is G4; the sequence is NKAD. A G5 region spans residues 174 to 176; it reads SAL.

The protein belongs to the TRAFAC class translation factor GTPase superfamily. Classic translation factor GTPase family. EF-Tu/EF-1A subfamily. Monomer.

It is found in the cytoplasm. The catalysed reaction is GTP + H2O = GDP + phosphate + H(+). In terms of biological role, GTP hydrolase that promotes the GTP-dependent binding of aminoacyl-tRNA to the A-site of ribosomes during protein biosynthesis. This Ruthia magnifica subsp. Calyptogena magnifica protein is Elongation factor Tu 2.